A 95-amino-acid chain; its full sequence is Costars family protein WS02710_H03 (95 aa).

The protein belongs to the costars family.

The chain is Costars family protein WS02710_H03 from Picea sitchensis (Sitka spruce).